The primary structure comprises 162 residues: Putative pre-16S rRNA nuclease (162 aa).

Belongs to the YqgF nuclease family.

The protein resides in the cytoplasm. Its function is as follows. Could be a nuclease involved in processing of the 5'-end of pre-16S rRNA. In Brucella abortus (strain S19), this protein is Putative pre-16S rRNA nuclease.